Consider the following 316-residue polypeptide: MRTDWTRDEIAALIALPFPELMFRAQSVHRARFDPTEIQISTLLSIKTGGCPEDCAYCPQSAKHEDGGVKASRLMAVEAVLKEARAARDAGAARFCMGAAWRSPKDHDLETVCAMVEGVKSLGMETCVTLGMLDDRQAHRLREAGLDYYNHNLDTSPEHYGSIISTRTYQERLDTLAHVRDAGINVCCGGIVGMGENDDDRAGLIASLASLPRHPESVPINLLVRVAGTPLAGADPVDPIDFVRIIAAARIAMPASRVRLAAGREDMTDEAQTLCFLAGANSIFYGEKLLTTPNPEASRDARLLARLGMHTSLAQA.

Residues threonine 36–arginine 264 enclose the Radical SAM core domain. Residues cysteine 51, cysteine 55, and cysteine 58 each coordinate [4Fe-4S] cluster. [2Fe-2S] cluster-binding residues include cysteine 96, cysteine 127, cysteine 187, and arginine 259.

The protein belongs to the radical SAM superfamily. Biotin synthase family. In terms of assembly, homodimer. It depends on [4Fe-4S] cluster as a cofactor. [2Fe-2S] cluster is required as a cofactor.

It carries out the reaction (4R,5S)-dethiobiotin + (sulfur carrier)-SH + 2 reduced [2Fe-2S]-[ferredoxin] + 2 S-adenosyl-L-methionine = (sulfur carrier)-H + biotin + 2 5'-deoxyadenosine + 2 L-methionine + 2 oxidized [2Fe-2S]-[ferredoxin]. It participates in cofactor biosynthesis; biotin biosynthesis; biotin from 7,8-diaminononanoate: step 2/2. In terms of biological role, catalyzes the conversion of dethiobiotin (DTB) to biotin by the insertion of a sulfur atom into dethiobiotin via a radical-based mechanism. The polypeptide is Biotin synthase (Gluconacetobacter diazotrophicus (strain ATCC 49037 / DSM 5601 / CCUG 37298 / CIP 103539 / LMG 7603 / PAl5)).